Here is a 2148-residue protein sequence, read N- to C-terminus: Polyketide synthase 1 (2148 aa).

The tract at residues 19–261 is N-terminal acylcarrier protein transacylase domain (SAT); that stretch reads FIFGDQSSCN…TPLAVHAPYH (243 aa). The 436-residue stretch at 394–829 folds into the Ketosynthase family 3 (KS3) domain; sequence DSKIAIIGMS…GGNTALLVED (436 aa). Active-site for beta-ketoacyl synthase activity residues include Cys566, His701, and His745. The malonyl-CoA:ACP transacylase (MAT) domain stretch occupies residues 929–1233; it reads AFVFSGQGSQ…PSLMRNKDGW (305 aa). The active-site For acyl/malonyl transferase activity is the Ser1018. The interval 1310–1624 is product template (PT) domain; the sequence is TASVHRIVHE…RKVLNTAMPP (315 aa). The tract at residues 1314 to 1447 is N-terminal hotdog fold; the sequence is HRIVHESVDK…SSLHFEQPKV (134 aa). The region spanning 1314–1619 is the PKS/mFAS DH domain; the sequence is HRIVHESVDK…FQGIPRKVLN (306 aa). The Proton acceptor; for dehydratase activity role is filled by His1346. Positions 1474 to 1619 are C-terminal hotdog fold; it reads LNSRMSSGVI…FQGIPRKVLN (146 aa). Residue Asp1533 is the Proton donor; for dehydratase activity of the active site. A disordered region spans residues 1619 to 1655; the sequence is NTAMPPPKSQNEAQVHSSPAKSRPKPPGSASSVHSGR. The segment covering 1627 to 1638 has biased composition (polar residues); sequence SQNEAQVHSSPA. The Carrier 1 domain maps to 1678–1752; that stretch reads RDPMQALFKI…DLATHLGFDT (75 aa). Ser1712 carries the O-(pantetheine 4'-phosphoryl)serine modification. Residues 1756–1769 are compositionally biased toward low complexity; sequence DQSSGQSSSCGGLS. Positions 1756-1796 are disordered; that stretch reads DQSSGQSSSCGGLSPRSDSTGEITSNATTPPSLSPRGSVSG. A compositionally biased stretch (polar residues) spans 1771-1796; that stretch reads RSDSTGEITSNATTPPSLSPRGSVSG. A Carrier 2 domain is found at 1793–1870; that stretch reads SVSGSQCKDV…SFKHMFQQGH (78 aa). At Ser1830 the chain carries O-(pantetheine 4'-phosphoryl)serine. Positions 1882-2146 are thioesterase (TE) domain; it reads LKQYRATSTL…ERVAAFIRST (265 aa). Ser1973 serves as the catalytic For thioesterase activity.

In terms of biological role, polyketide synthase; part of the Pks1 gene cluster that mediates the biosynthesis of an anthraquinone derivative pigment that contributes to conidial pigmentation that provides protection from UV radiation, heat and cold stress. The polyketide synthase Pks1 produces 1-acetyl-2,4,6,8-tetrahydroxy-9,10-anthraquinone though condensation of acetyl-CoA with malonyl-CoA. The dehydratase EthD and the laccase Mlac1 further convert the anthraquinone derivative into the final conidial pigment. This Metarhizium acridum (strain CQMa 102) protein is Polyketide synthase 1.